The following is a 333-amino-acid chain: DNA-directed RNA polymerase subunit alpha (333 aa).

Residues 1 to 235 (MQTNLLKPKA…EQLAVFAQLE (235 aa)) are alpha N-terminal domain (alpha-NTD). The interval 253–333 (FDPILLRPVD…NWPPQGLDKR (81 aa)) is alpha C-terminal domain (alpha-CTD).

This sequence belongs to the RNA polymerase alpha chain family. Homodimer. The RNAP catalytic core consists of 2 alpha, 1 beta, 1 beta' and 1 omega subunit. When a sigma factor is associated with the core the holoenzyme is formed, which can initiate transcription.

The catalysed reaction is RNA(n) + a ribonucleoside 5'-triphosphate = RNA(n+1) + diphosphate. DNA-dependent RNA polymerase catalyzes the transcription of DNA into RNA using the four ribonucleoside triphosphates as substrates. This Methylibium petroleiphilum (strain ATCC BAA-1232 / LMG 22953 / PM1) protein is DNA-directed RNA polymerase subunit alpha.